Here is a 77-residue protein sequence, read N- to C-terminus: TIDXPEDFKHYEVQLPDVKIHYVREGAGPTLLLVEKPEIAIDRIKTAFRKPDNIHGGFNYYRANIRPDAALWTDLDH.

As to quaternary structure, monomer.

It carries out the reaction an epoxide + H2O = an ethanediol. Its function is as follows. This enzyme acts on aliphatic epoxides. Its substrates include epichlorohydrin, epibromohydrin, epoxyoctane and styrene epoxide. This chain is Epoxide hydrolase, found in Pseudomonas sp. (strain AD1).